The sequence spans 85 residues: Toxin TdNa8 (85 aa).

Residues 1–19 (MNYLTLIAAASLLTAGTES) form the signal peptide. Residues 21-81 (KDGYPVKEGD…AAIKGYGRCR (61 aa)) form the LCN-type CS-alpha/beta domain. Disulfide bonds link Cys31-Cys80, Cys35-Cys56, Cys42-Cys63, and Cys46-Cys65. Pro82 bears the Proline amide mark.

Belongs to the long (4 C-C) scorpion toxin superfamily. Sodium channel inhibitor family. Alpha subfamily. In terms of tissue distribution, expressed by the venom gland.

Its subcellular location is the secreted. Its function is as follows. Alpha toxins bind voltage-independently at site-3 of sodium channels (Nav) and inhibit the inactivation of the activated channels, thereby blocking neuronal transmission. The protein is Toxin TdNa8 of Tityus discrepans (Venezuelan scorpion).